A 628-amino-acid chain; its full sequence is MDGFAQDWPSLTHTTDNVLTMDQLGGVSGAVGDLPGDVGFEPQTRARSNTWPCPHPEPFVEPADELDSTKASNQQLAAGDSQQTIQSANAAKKNSARRNAWGNLSYADLITHAIGSATDKRLTLSQIYEWMVQNVPYFKDKGDSNSSAGWKNSIRHNLSLHNRFMRVQNEGTGKSSWWMLNPEAKPGKSVRRRAASMETSRYEKRRGRAKKRVEALRQAGVVGLNDATPSPSSSVSEGLDHFPESPLHSGGFQLSPDFRQRASSNASSCGRLSPIRALDLEPEWGFTVDYQNTTLTQAQSQVLDQLAGSIADELKLHPDMLQQQGFSAASGLPTQPPPPPYPAPQQQQQQQPQQQQAYTLNGGPPGGYASLQPQPQCLIHRSLNCSCLHNARDGLSPNSVTTTMSPAYPNSEPSSDSLNTYSNVVIDGSGDNGSLLVQQQRQQQQQQQQQQQLGSNLEGQCLEVLNNEAQPIDEFNLENFPVENLECNMEELLQQEMSYDGLLDINIPLAAVSTNAPLVNLINNSSTTISSSSNIGCSTTTSSSSLSASAQLNQLQAQLQQQHQQQQQQQQQQQQQQLQQQQQQLLLNNNNNNNNSLELATQTASANLNARVQYSQPSVVTSPPSWVH.

T50 carries the post-translational modification Phosphothreonine; by PKB/AKT1. Phosphoserine is present on S81. Positions 101–207 form a DNA-binding region, fork-head; it reads WGNLSYADLI…ETSRYEKRRG (107 aa). 2 disordered regions span residues 188–210 and 223–270; these read KSVRRRAASMETSRYEKRRGRAK and GLND…SSCG. S196 is modified (phosphoserine; by PKB/AKT1). Composition is skewed to polar residues over residues 227–236 and 261–270; these read ATPSPSSSVS and RASSNASSCG. S264 carries the phosphoserine; by PKB/AKT1 modification. Phosphoserine is present on residues S267, S268, and S273. Disordered stretches follow at residues 327–373 and 398–451; these read SAAS…SLQP and NSVT…QQQQ. Residues 334–343 are compositionally biased toward pro residues; that stretch reads TQPPPPPYPA. Over residues 344–359 the composition is skewed to low complexity; sequence PQQQQQQQPQQQQAYT. Residues 411–423 are compositionally biased toward polar residues; the sequence is SEPSSDSLNTYSN. Low complexity predominate over residues 438–451; it reads QQQRQQQQQQQQQQ.

As to quaternary structure, interacts with melt.

It is found in the cytoplasm. The protein resides in the nucleus. Its function is as follows. Transcription factor involved in the regulation of the insulin signaling pathway. Consistently activates both the downstream target Thor\d4EBP and the feedback control target InR. Involved in negative regulation of the cell cycle, modulating cell growth and proliferation. In response to cellular stresses, such as nutrient deprivation or increased levels of reactive oxygen species, foxo is activated and inhibits growth through the action of target genes such as Thor. Foxo activated in the adult fat body can regulate lifespan in adults; an insulin peptide itself may function as one secondary messenger of insulin-regulated aging. Also regulates Lip4, homolog of human acid lipases, thereby acting as a key modulator of lipid metabolism by insulin signaling and integrates insulin responses to glucose and lipid homeostasis. This is Forkhead box protein O from Drosophila willistoni (Fruit fly).